The primary structure comprises 711 residues: L-type lectin-domain containing receptor kinase VIII.2 (711 aa).

A signal peptide spans 1-30 (MLKLPPRFFSVYSTLIHILASFLCSSDVRG). Residues 31 to 315 (DFPATRFDLG…NKLCKKSPAA (285 aa)) are Extracellular-facing. The interval 35–260 (TRFDLGTLTL…IHSVDWWSFS (226 aa)) is legume-lectin like. An N-linked (GlcNAc...) asparagine glycan is attached at N57. Residues 265–306 (ESSESPPPMPNSPPPSSPSSSITPSLSTVRRKTADPSSSCRN) are disordered. The span at 269–281 (SPPPMPNSPPPSS) shows a compositional bias: pro residues. Over residues 282-291 (PSSSITPSLS) the composition is skewed to low complexity. Residues 316–336 (VAGVVTAGAFFLALFAGVIIW) traverse the membrane as a helical segment. The Cytoplasmic segment spans residues 337-711 (VYSKKIKYTR…IFIVGKDRSV (375 aa)). Positions 374 to 656 (FSSSRVIGNG…LVGEADVPEV (283 aa)) constitute a Protein kinase domain. Residues 380–388 (IGNGAFGTV) and K403 contribute to the ATP site. The Proton acceptor role is filled by D497.

The protein in the C-terminal section; belongs to the protein kinase superfamily. Ser/Thr protein kinase family. This sequence in the N-terminal section; belongs to the leguminous lectin family.

The protein resides in the cell membrane. The enzyme catalyses L-seryl-[protein] + ATP = O-phospho-L-seryl-[protein] + ADP + H(+). The catalysed reaction is L-threonyl-[protein] + ATP = O-phospho-L-threonyl-[protein] + ADP + H(+). In terms of biological role, involved in resistance response to the pathogenic oomycetes Phytophthora infestans and Phytophthora capsici. This is L-type lectin-domain containing receptor kinase VIII.2 from Arabidopsis thaliana (Mouse-ear cress).